The sequence spans 273 residues: Putative pyruvate, phosphate dikinase regulatory protein (273 aa).

Gly153–Thr160 contributes to the ADP binding site.

This sequence belongs to the pyruvate, phosphate/water dikinase regulatory protein family. PDRP subfamily.

It catalyses the reaction N(tele)-phospho-L-histidyl/L-threonyl-[pyruvate, phosphate dikinase] + ADP = N(tele)-phospho-L-histidyl/O-phospho-L-threonyl-[pyruvate, phosphate dikinase] + AMP + H(+). The catalysed reaction is N(tele)-phospho-L-histidyl/O-phospho-L-threonyl-[pyruvate, phosphate dikinase] + phosphate + H(+) = N(tele)-phospho-L-histidyl/L-threonyl-[pyruvate, phosphate dikinase] + diphosphate. Bifunctional serine/threonine kinase and phosphorylase involved in the regulation of the pyruvate, phosphate dikinase (PPDK) by catalyzing its phosphorylation/dephosphorylation. The chain is Putative pyruvate, phosphate dikinase regulatory protein from Rhizobium leguminosarum bv. trifolii (strain WSM2304).